The sequence spans 303 residues: Probable aspartoacylase (303 aa).

2 residues coordinate Zn(2+): H13 and E16. Substrate-binding positions include R55 and 62–63 (NR). H104 contacts Zn(2+). Residues E162 and Y273 each contribute to the substrate site.

Belongs to the AspA/AstE family. Aspartoacylase subfamily. Requires Zn(2+) as cofactor.

The catalysed reaction is an N-acyl-L-aspartate + H2O = a carboxylate + L-aspartate. The polypeptide is Probable aspartoacylase (Parasynechococcus marenigrum (strain WH8102)).